The primary structure comprises 76 residues: ATP synthase subunit 9, mitochondrial (76 aa).

Met1 is modified (N-formylmethionine). 2 consecutive transmembrane segments (helical) span residues 14–34 (IATIGLTGAGIGIAIVFAALI) and 52–72 (ILGFALSEATGLFCLMISFLL).

In terms of assembly, F-type ATP synthases have 2 components, the catalytic core F(1) and the membrane-embedded component F(0), linked together by a central stalk and a peripheral stalk. The central stalk, also called rotor shaft, is often seen as part of F(1). The peripheral stalk is seen as part of F(0). F(0) contains the membrane channel next to the rotor. F-type ATP synthases form dimers but each monomer functions independently in ATP generation. The dimer consists of 18 different polypeptides: ATP1 (subunit alpha, part of F(1), 3 molecules per monomer), ATP2 (subunit beta, part of F(1), 3 molecules per monomer), ATP3 (subunit gamma, part of the central stalk), ATP4 (subunit b, part of the peripheral stalk), ATP5/OSCP (subunit 5/OSCP, part of the peripheral stalk), ATP6 (subunit a, part of the peripheral stalk), ATP7 (subunit d, part of the peripheral stalk), ATP8 (subunit 8, part of the peripheral stalk), OLI1 (subunit c, part of the rotor, 10 molecules per monomer), ATP14 (subunit h, part of the peripheral stalk), ATP15 (subunit epsilon, part of the central stalk), ATP16 (subunit delta, part of the central stalk), ATP17 (subunit f, part of the peripheral stalk), ATP18 (subunit i/j, part of the peripheral stalk). Dimer-specific subunits are ATP19 (subunit k, at interface between monomers), ATP20 (subunit g, at interface between monomers), TIM11 (subunit e, at interface between monomers). Also contains subunit L.

It localises to the mitochondrion inner membrane. Mitochondrial membrane ATP synthase (F(1)F(0) ATP synthase or Complex V) produces ATP from ADP in the presence of a proton gradient across the membrane which is generated by electron transport complexes of the respiratory chain. F-type ATP synthases consist of two structural domains, F(1) - containing the extramembraneous catalytic core, and F(0) - containing the membrane proton channel, linked together by a central stalk and a peripheral stalk. During catalysis, ATP synthesis in the catalytic domain of F(1) is coupled via a rotary mechanism of the central stalk subunits to proton translocation. Part of the complex F(0) domain. A homomeric c-ring of 10 OLI1/ATP9 subunits is part of the complex rotary element. In Pichia angusta (Yeast), this protein is ATP synthase subunit 9, mitochondrial.